An 872-amino-acid polypeptide reads, in one-letter code: Probable cation-transporting P-type ATPase (872 aa).

Residues methionine 1–lysine 41 lie on the Cytoplasmic side of the membrane. Residues serine 42–serine 62 traverse the membrane as a helical segment. Residues glycine 63–threonine 79 lie on the Extracellular side of the membrane. A helical membrane pass occupies residues glutamine 80 to phenylalanine 100. At lysine 101–leucine 237 the chain is on the cytoplasmic side. Residues glutamate 238–leucine 257 form a helical membrane-spanning segment. The Extracellular segment spans residues valine 258–alanine 275. A helical transmembrane segment spans residues leucine 276–threonine 293. The Cytoplasmic segment spans residues phenylalanine 294–cysteine 642. Aspartate 331 functions as the 4-aspartylphosphate intermediate in the catalytic mechanism. Mg(2+) contacts are provided by aspartate 587 and aspartate 591. Residues lysine 643–leucine 662 traverse the membrane as a helical segment. The Extracellular segment spans residues glycine 663–phenylalanine 685. A helical membrane pass occupies residues threonine 686–alanine 706. At isoleucine 707–leucine 724 the chain is on the cytoplasmic side. The helical transmembrane segment at phenylalanine 725 to phenylalanine 747 threads the bilayer. Topologically, residues tyrosine 748–isoleucine 768 are extracellular. The helical transmembrane segment at asparagine 769–serine 788 threads the bilayer. Residues leucine 789–asparagine 801 lie on the Cytoplasmic side of the membrane. A helical transmembrane segment spans residues proline 802–phenylalanine 824. The Extracellular segment spans residues isoleucine 825–proline 842. A helical membrane pass occupies residues valine 843 to lysine 863. Residues leucine 864–valine 872 are Cytoplasmic-facing.

Belongs to the cation transport ATPase (P-type) (TC 3.A.3) family. Type II subfamily.

Its subcellular location is the cell membrane. It catalyses the reaction ATP + H2O = ADP + phosphate + H(+). Its function is as follows. Could mediate calcium influx. This Mycoplasma pneumoniae (strain ATCC 29342 / M129 / Subtype 1) (Mycoplasmoides pneumoniae) protein is Probable cation-transporting P-type ATPase (pacL).